Here is a 210-residue protein sequence, read N- to C-terminus: Urease accessory protein UreG (210 aa).

Position 14-21 (14-21 (GPVGSGKT)) interacts with GTP.

This sequence belongs to the SIMIBI class G3E GTPase family. UreG subfamily. Homodimer. UreD, UreF and UreG form a complex that acts as a GTP-hydrolysis-dependent molecular chaperone, activating the urease apoprotein by helping to assemble the nickel containing metallocenter of UreC. The UreE protein probably delivers the nickel.

The protein resides in the cytoplasm. In terms of biological role, facilitates the functional incorporation of the urease nickel metallocenter. This process requires GTP hydrolysis, probably effectuated by UreG. The protein is Urease accessory protein UreG of Rhodopseudomonas palustris (strain BisB5).